The primary structure comprises 366 residues: tRNA/tmRNA (uracil-C(5))-methyltransferase (366 aa).

Residues Gln190, Tyr218, Asn223, Glu239, and Asp299 each coordinate S-adenosyl-L-methionine. Residue Cys324 is the Nucleophile of the active site. Glu358 serves as the catalytic Proton acceptor.

It belongs to the class I-like SAM-binding methyltransferase superfamily. RNA M5U methyltransferase family. TrmA subfamily.

It catalyses the reaction uridine(54) in tRNA + S-adenosyl-L-methionine = 5-methyluridine(54) in tRNA + S-adenosyl-L-homocysteine + H(+). The enzyme catalyses uridine(341) in tmRNA + S-adenosyl-L-methionine = 5-methyluridine(341) in tmRNA + S-adenosyl-L-homocysteine + H(+). Dual-specificity methyltransferase that catalyzes the formation of 5-methyluridine at position 54 (m5U54) in all tRNAs, and that of position 341 (m5U341) in tmRNA (transfer-mRNA). The sequence is that of tRNA/tmRNA (uracil-C(5))-methyltransferase from Salmonella paratyphi C (strain RKS4594).